A 723-amino-acid chain; its full sequence is Transient receptor potential cation channel subfamily V member 5 (723 aa).

Topologically, residues 1 to 320 are cytoplasmic; sequence MGVKKPWIQL…SLKWKKYGQP (320 aa). 5 ANK repeats span residues 72–101, 110–139, 156–185, 189–222, and 232–261; these read LGET…YLVT, VGQT…SASA, YGEH…DIRA, LGNT…GDHL, and QGLT…HIQW. The helical transmembrane segment at 321-341 threads the bilayer; that stretch reads YFCLLGMLYIFYMICFTTCCV. Over 342–378 the chain is Extracellular; that stretch reads YRPLKFRDANRTHVRDNTVLEQKPLQEAYVTYQDKVR. A glycan (N-linked (GlcNAc...) asparagine) is linked at Asn-351. A helical membrane pass occupies residues 379–401; that stretch reads LVGELVTVIGAVVILLIEIPDIF. At 402–412 the chain is on the cytoplasmic side; it reads RVGASRYFGHT. A helical transmembrane segment spans residues 413–435; it reads VLGGPFHVIIITYASLVLLIMVM. Over 436–441 the chain is Extracellular; sequence RLTSMN. Residues 442 to 462 traverse the membrane as a helical segment; sequence GEVVPISMALVLGWCSVMYFS. Residues 463-485 are Cytoplasmic-facing; that stretch reads RGFQMLGPFTIMIQKMIFGDLLR. A helical membrane pass occupies residues 486–506; sequence FCWLMAMVILGFASAFYIIFQ. Residues 517–537 constitute an intramembrane region (pore-forming); sequence SDYPTAMFSTFELFLTIIDGP. Asp-535 provides a ligand contact to Ca(2+). The chain crosses the membrane as a helical span at residues 550–570; it reads LTYFAFAIIATLLMLNLFIAM. Residues 571 to 723 are Cytoplasmic-facing; sequence MGDTHWRVAQ…EGDGEEIYHF (153 aa). The tract at residues 591 to 595 is interaction with S100A10; it reads VATTV. The involved in Ca(2+)-dependent inactivation stretch occupies residues 643–646; that stretch reads AFKS. Residues 651-674 are disordered; sequence EVQEQLSEKQPSGTETGTLARGSV. Over residues 654–667 the composition is skewed to polar residues; that stretch reads EQLSEKQPSGTETG. The residue at position 678 (Thr-678) is a Phosphothreonine. The residue at position 682 (Ser-682) is a Phosphoserine. Positions 693–723 are involved in Ca(2+)-dependent inactivation; the sequence is RGWEILRRNTLGHLNLGQDLGEGDGEEIYHF.

This sequence belongs to the transient receptor (TC 1.A.4) family. TrpV subfamily. TRPV5 sub-subfamily. As to quaternary structure, homotetramer and probably heterotetramer with TRPV6. Interacts with TRPV6. Interacts with S100A10 and probably with the ANAX2-S100A10 heterotetramer. The interaction with S100A10 is required for the trafficking to the plasma membrane. Interacts with calmodulin. Interacts with BSPRY, which results in its inactivation. In terms of processing, glycosylated. In terms of tissue distribution, detected in kidney (at protein level). Detected in kidney.

It is found in the cell membrane. The protein resides in the apical cell membrane. It carries out the reaction Ca(2+)(in) = Ca(2+)(out). With respect to regulation, activated by WNK3. Constitutively active calcium selective cation channel thought to be involved in Ca(2+) reabsorption in kidney and intestine. Required for normal Ca(2+) reabsorption in the kidney distal convoluted tubules. The channel is activated by low internal calcium level and the current exhibits an inward rectification. A Ca(2+)-dependent feedback regulation includes fast channel inactivation and slow current decay. Heteromeric assembly with TRPV6 seems to modify channel properties. TRPV5-TRPV6 heteromultimeric concatemers exhibit voltage-dependent gating. The protein is Transient receptor potential cation channel subfamily V member 5 (Trpv5) of Rattus norvegicus (Rat).